The sequence spans 948 residues: Isoleucine--tRNA ligase (948 aa).

Residues 58-68 (PYANGDIHIGH) carry the 'HIGH' region motif. Residue Glu566 participates in L-isoleucyl-5'-AMP binding. The short motif at 607-611 (KMSKS) is the 'KMSKS' region element. Lys610 provides a ligand contact to ATP. The Zn(2+) site is built by Cys911, Cys914, Cys931, and Cys934.

Belongs to the class-I aminoacyl-tRNA synthetase family. IleS type 1 subfamily. As to quaternary structure, monomer. Zn(2+) serves as cofactor.

The protein resides in the cytoplasm. The catalysed reaction is tRNA(Ile) + L-isoleucine + ATP = L-isoleucyl-tRNA(Ile) + AMP + diphosphate. Catalyzes the attachment of isoleucine to tRNA(Ile). As IleRS can inadvertently accommodate and process structurally similar amino acids such as valine, to avoid such errors it has two additional distinct tRNA(Ile)-dependent editing activities. One activity is designated as 'pretransfer' editing and involves the hydrolysis of activated Val-AMP. The other activity is designated 'posttransfer' editing and involves deacylation of mischarged Val-tRNA(Ile). The sequence is that of Isoleucine--tRNA ligase from Vibrio vulnificus (strain YJ016).